The primary structure comprises 363 residues: Protein-arginine kinase (363 aa).

Residues Ile24–Ala254 enclose the Phosphagen kinase C-terminal domain. ATP contacts are provided by residues Ser27–Arg31, His92, Arg125, Arg176–Met180, and Arg207–Glu212. The RDXXRA motif of the pArg binding pocket involved in allosteric regulation motif lies at Arg337–Ala342.

It belongs to the ATP:guanido phosphotransferase family.

It catalyses the reaction L-arginyl-[protein] + ATP = N(omega)-phospho-L-arginyl-[protein] + ADP + H(+). With respect to regulation, appears to be allosterically activated by the binding of pArg-containing polypeptides to the pArg-binding pocket localized in the C-terminal domain of McsB. In terms of biological role, catalyzes the specific phosphorylation of arginine residues in a large number of proteins. Is part of the bacterial stress response system. Protein arginine phosphorylation has a physiologically important role and is involved in the regulation of many critical cellular processes, such as protein homeostasis, motility, competence, and stringent and stress responses, by regulating gene expression and protein activity. This Bacillus pumilus (strain SAFR-032) protein is Protein-arginine kinase.